The following is a 464-amino-acid chain: Heterogeneous nuclear ribonucleoprotein K (464 aa).

Position 1 is an N-acetylmethionine (M1). Positions 1 to 37 (METEQPEETFPNTETNGEFGKRPAEDMEEEQAFKRSR) are disordered. Residues 1 to 276 (METEQPEETF…GRGGRPMPPS (276 aa)) form a necessary for interaction with DDX1 region. Positions 19–37 (FGKRPAEDMEEEQAFKRSR) are enriched in basic and acidic residues. K34 is modified (N6-acetyllysine; alternate). Residue K34 forms a Glycyl lysine isopeptide (Lys-Gly) (interchain with G-Cter in SUMO1); alternate linkage. K34 participates in a covalent cross-link: Glycyl lysine isopeptide (Lys-Gly) (interchain with G-Cter in SUMO2); alternate. Position 36 is a phosphoserine (S36). Residue T39 is modified to Phosphothreonine. Residues 42-104 (MVELRILLQS…ETIGEILKKI (63 aa)) enclose the KH 1 domain. Residues K52 and K60 each participate in a glycyl lysine isopeptide (Lys-Gly) (interchain with G-Cter in SUMO2) cross-link. 2 consecutive repeat copies span residues 54–76 (AGAV…NASV) and 59–62 (GKGG). Positions 54–421 (AGAVIGKGGK…QIRHESGASI (368 aa)) are 2 X 22 AA approximate repeats. The 5 X 4 AA repeats of G-X-G-G stretch occupies residues 59–407 (GKGGKNIKAL…LAGSIIGKGG (349 aa)). S75 and S116 each carry phosphoserine. Residues 144–209 (DCELRLLIHQ…DRVVECIKII (66 aa)) enclose the KH 2 domain. K163 participates in a covalent cross-link: Glycyl lysine isopeptide (Lys-Gly) (interchain with G-Cter in SUMO1); alternate. A Glycyl lysine isopeptide (Lys-Gly) (interchain with G-Cter in SUMO2); alternate cross-link involves residue K163. Residue K198 is modified to N6-acetyllysine. The interaction with ZIK1 stretch occupies residues 209–337 (ILDLISESPI…RPGDRYDGMV (129 aa)). Phosphoserine occurs at positions 214 and 216. Residue K219 forms a Glycyl lysine isopeptide (Lys-Gly) (interchain with G-Cter in SUMO2); alternate linkage. At K219 the chain carries N6-succinyllysine; alternate. Residues 236-273 (YGGFTMMFDDRRGRPVGFPMRGRGGFDRMPPGRGGRPM) form an RNA-binding RGG-box region. A run of 3 repeats spans residues 245-250 (DRRGRP), 257-260 (GRGG), and 267-270 (GRGG). Positions 245-329 (DRRGRPVGFP…LMAYDRRGRP (85 aa)) are 2 X 6 AA approximate repeats. The tract at residues 250 to 329 (PVGFPMRGRG…LMAYDRRGRP (80 aa)) is disordered. A compositionally biased stretch (low complexity) spans 252–266 (GFPMRGRGGFDRMPP). Basic and acidic residues predominate over residues 276–285 (SRRDYDDMSP). The residue at position 284 (S284) is a Phosphoserine. The 3-4 repeat unit spans residues 295-298 (GRGG). R316 carries the omega-N-methylarginine modification. The 2-2 repeat unit spans residues 324-329 (DRRGRP). R377 is subject to Omega-N-methylarginine. S379 is modified (phosphoserine). Phosphotyrosine is present on Y380. In terms of domain architecture, KH 3 spans 387-451 (IITTQVTIPK…DQIQNAQYLL (65 aa)). 2 consecutive repeat copies span residues 399–421 (AGSI…GASI) and 404–407 (GKGG). N6-acetyllysine; alternate is present on K405. Residue K405 forms a Glycyl lysine isopeptide (Lys-Gly) (interchain with G-Cter in SUMO2); alternate linkage. Phosphoserine is present on S420. Residue K422 forms a Glycyl lysine isopeptide (Lys-Gly) (interchain with G-Cter in SUMO1); alternate linkage. Residue K422 forms a Glycyl lysine isopeptide (Lys-Gly) (interchain with G-Cter in SUMO2); alternate linkage. A Glycyl lysine isopeptide (Lys-Gly) (interchain with G-Cter in SUMO); alternate cross-link involves residue K422.

As to quaternary structure, identified in the spliceosome C complex. Interacts with ANKRD28, RBM42 and ZIK1. Interacts with DDX1. Interacts with MDM2; this interaction leads to ubiquitination and proteasomal degradation. Interacts with p53/TP53. Interacts with BRDT. Interacts with IVNS1ABP. Interacts with PPIA/CYPA. Part of a transcription inhibitory ribonucleoprotein complex composed at least of the circular RNA circZNF827, ZNF827 and HNRNPL. Post-translationally, sumoylated by CBX4. Sumoylation is increased upon DNA damage, such as that produced by doxorubicin, etoposide, UV light and camptothecin, due to enhanced CBX4 phosphorylation by HIPK2 under these conditions. In terms of processing, ubiquitinated by MDM2. Doxorubicin treatment does not affect monoubiquitination, but slightly decreases HNRNPK poly-ubiquitination. O-glycosylated (O-GlcNAcylated), in a cell cycle-dependent manner.

It is found in the cytoplasm. Its subcellular location is the nucleus. The protein localises to the nucleoplasm. It localises to the cell projection. The protein resides in the podosome. Functionally, one of the major pre-mRNA-binding proteins. Binds tenaciously to poly(C) sequences. Likely to play a role in the nuclear metabolism of hnRNAs, particularly for pre-mRNAs that contain cytidine-rich sequences. Can also bind poly(C) single-stranded DNA. Plays an important role in p53/TP53 response to DNA damage, acting at the level of both transcription activation and repression. When sumoylated, acts as a transcriptional coactivator of p53/TP53, playing a role in p21/CDKN1A and 14-3-3 sigma/SFN induction. As far as transcription repression is concerned, acts by interacting with long intergenic RNA p21 (lincRNA-p21), a non-coding RNA induced by p53/TP53. This interaction is necessary for the induction of apoptosis, but not cell cycle arrest. As part of a ribonucleoprotein complex composed at least of ZNF827, HNRNPL and the circular RNA circZNF827 that nucleates the complex on chromatin, may negatively regulate the transcription of genes involved in neuronal differentiation. The polypeptide is Heterogeneous nuclear ribonucleoprotein K (HNRNPK) (Bos taurus (Bovine)).